Consider the following 978-residue polypeptide: Rab3 GTPase-activating protein catalytic subunit (978 aa).

Disordered stretches follow at residues 533–554 (EGKK…TASD), 586–621 (HSDT…RLHQ), and 908–936 (EEEP…GREL). The segment covering 540–554 (LYSSSESSVNKTASD) has biased composition (polar residues). Composition is skewed to basic and acidic residues over residues 586 to 619 (HSDT…EGRL) and 909 to 922 (EEPK…DRRQ).

This sequence belongs to the Rab3-GAP catalytic subunit family. In terms of assembly, the Rab3 GTPase-activating complex is a heterodimer composed of rab3gap1 and rab3gap2. The Rab3 GTPase-activating complex interacts with DMXL2. Interacts with LMAN1.

It localises to the cytoplasm. Its subcellular location is the endoplasmic reticulum. It is found in the golgi apparatus. The protein resides in the cis-Golgi network. Catalytic subunit of the Rab3 GTPase-activating (Rab3GAP) complex composed of rab3gap1 and rab3gap2, which has GTPase-activating protein (GAP) activity towards various Rab3 subfamily members (RAB3A, RAB3B, RAB3C and RAB3D), RAB5A and RAB43, and guanine nucleotide exchange factor (GEF) activity towards RAB18. As part of the Rab3GAP complex, acts as a GAP for Rab3 proteins by converting active RAB3-GTP to the inactive form RAB3-GDP. Rab3 proteins are involved in regulated exocytosis of neurotransmitters and hormones. The Rab3GAP complex, acts as a GEF for RAB18 by promoting the conversion of inactive RAB18-GDP to the active form RAB18-GTP. Recruits and stabilizes RAB18 at the cis-Golgi membrane where RAB18 is most likely activated. Also involved in RAB18 recruitment at the endoplasmic reticulum (ER) membrane where it maintains proper ER structure. Required for normal eye and brain development. May participate in neurodevelopmental processes such as proliferation, migration and differentiation before synapse formation, and non-synaptic vesicular release of neurotransmitters. The polypeptide is Rab3 GTPase-activating protein catalytic subunit (rab3gap1) (Xenopus laevis (African clawed frog)).